We begin with the raw amino-acid sequence, 408 residues long: 1-deoxy-D-xylulose 5-phosphate reductoisomerase (408 aa).

Residues threonine 27, glycine 28, serine 29, isoleucine 30, alanine 53, arginine 54, asparagine 55, and asparagine 140 each contribute to the NADPH site. Position 141 (lysine 141) interacts with 1-deoxy-D-xylulose 5-phosphate. Glutamate 142 lines the NADPH pocket. Residue aspartate 166 coordinates Mn(2+). Residues serine 167, glutamate 168, serine 192, and histidine 215 each contribute to the 1-deoxy-D-xylulose 5-phosphate site. Glutamate 168 serves as a coordination point for Mn(2+). Glycine 221 lines the NADPH pocket. Positions 228, 233, 234, and 237 each coordinate 1-deoxy-D-xylulose 5-phosphate. Glutamate 237 is a binding site for Mn(2+).

Belongs to the DXR family. Requires Mg(2+) as cofactor. It depends on Mn(2+) as a cofactor.

The catalysed reaction is 2-C-methyl-D-erythritol 4-phosphate + NADP(+) = 1-deoxy-D-xylulose 5-phosphate + NADPH + H(+). The protein operates within isoprenoid biosynthesis; isopentenyl diphosphate biosynthesis via DXP pathway; isopentenyl diphosphate from 1-deoxy-D-xylulose 5-phosphate: step 1/6. Catalyzes the NADPH-dependent rearrangement and reduction of 1-deoxy-D-xylulose-5-phosphate (DXP) to 2-C-methyl-D-erythritol 4-phosphate (MEP). The chain is 1-deoxy-D-xylulose 5-phosphate reductoisomerase from Nitratidesulfovibrio vulgaris (strain ATCC 29579 / DSM 644 / CCUG 34227 / NCIMB 8303 / VKM B-1760 / Hildenborough) (Desulfovibrio vulgaris).